The following is a 330-amino-acid chain: Putative pentatricopeptide repeat-containing protein At5g36300 (330 aa).

PPR repeat units follow at residues 10-44 (SLSMYNSWIRYFCRTGETNEAMSLLAEIHSLGSRP), 45-75 (DPLSYVSFIETLASLRRTLEADALFHEVVRF), 83-113 (VRLYNALVSRYLRKEVSWRVVNEMKKRKFRL), 114-148 (NSFVYGKIIRIYRDNGMWKKALGIVEEIREIGLPM), 149-179 (DVEIYNSVIDTFGKYGELDEELQVLEKLQRS), 185-215 (NIRTWNSLIRWHCHHGAVDMALELFTMIFED), 231-265 (SANLFCTLANAYAQQGLCKQTVKVLKMMENEGIEP), 266-296 (NLIMLNVLINAFGTAGKHMEALSIYHHIKET), and 302-330 (DVVTYSTLMKAFTRAKKYEMVCSFYLVTL).

It belongs to the PPR family. P subfamily.

The polypeptide is Putative pentatricopeptide repeat-containing protein At5g36300 (Arabidopsis thaliana (Mouse-ear cress)).